The sequence spans 35 residues: Alpha-amanitin proprotein 1 (35 aa).

Residues 1-10 constitute a propeptide that is removed on maturation; sequence MSDINATRLP. (3R,4R)-4,5-dihydroxyisoleucine; in form alpha-amanitin is present on I11. I11 is subject to (3R,4S)-4-hydroxyisoleucine; in form gamma-amanitin. A cross-link (cyclopeptide (Ile-Pro)) is located at residues 11 to 18; it reads IWGIGCNP. The segment at residues 12-16 is a cross-link (2'-cysteinyl-6'-hydroxytryptophan sulfoxide (Trp-Cys)); the sequence is WGIGC. At P18 the chain carries 4-hydroxyproline. Positions 19–35 are excised as a propeptide; the sequence is CVGDDVTSVLTRGEALC.

Belongs to the MSDIN fungal toxin family. In terms of processing, processed by the macrocyclase-peptidase enzyme POPB to yield a toxic cyclic octapeptide. POPB first removes 10 residues from the N-terminus. Conformational trapping of the remaining peptide forces the enzyme to release this intermediate rather than proceed to macrocyclization. The enzyme rebinds the remaining peptide in a different conformation and catalyzes macrocyclization of the N-terminal 8 residues. As to expression, expressed in basidiocarps.

Major toxin belonging to the bicyclic octapeptides amatoxins that acts by binding non-competitively to RNA polymerase II and greatly slowing the elongation of transcripts from target promoters. This chain is Alpha-amanitin proprotein 1, found in Amanita exitialis (Guangzhou destroying angel).